The primary structure comprises 180 residues: Nucleoside-triphosphatase THEP1 (180 aa).

ATP contacts are provided by residues 9–16 (GPAGVGKT) and 104–111 (LIVIDEIG).

It belongs to the THEP1 NTPase family.

The catalysed reaction is a ribonucleoside 5'-triphosphate + H2O = a ribonucleoside 5'-diphosphate + phosphate + H(+). Functionally, has nucleotide phosphatase activity towards ATP, GTP, CTP, TTP and UTP. May hydrolyze nucleoside diphosphates with lower efficiency. The protein is Nucleoside-triphosphatase THEP1 of Thermococcus kodakarensis (strain ATCC BAA-918 / JCM 12380 / KOD1) (Pyrococcus kodakaraensis (strain KOD1)).